A 65-amino-acid polypeptide reads, in one-letter code: Large ribosomal subunit protein bL35 (65 aa).

It belongs to the bacterial ribosomal protein bL35 family.

The sequence is that of Large ribosomal subunit protein bL35 from Prochlorococcus marinus (strain MIT 9215).